A 285-amino-acid chain; its full sequence is HTH-type transcriptional regulator MurR (285 aa).

In terms of domain architecture, HTH rpiR-type spans 1 to 77; that stretch reads MLYLTKIRNA…MALIGEYSAS (77 aa). Residues 37–56 constitute a DNA-binding region (H-T-H motif); sequence SRKMAKQLGISQSSIVKFAQ. Residues 128–268 form the SIS domain; it reads IIEVISKAPF…FVGLVQLNDV (141 aa).

In terms of assembly, homotetramer.

The protein operates within amino-sugar metabolism; N-acetylmuramate degradation [regulation]. Its function is as follows. Represses the expression of the murPQ operon involved in the uptake and degradation of N-acetylmuramic acid (MurNAc). Binds to two adjacent inverted repeats within the operator region. MurNAc 6-phosphate, the substrate of MurQ, is the specific inducer that weakens binding of MurR to the operator. This is HTH-type transcriptional regulator MurR from Escherichia coli O9:H4 (strain HS).